A 269-amino-acid chain; its full sequence is Protein LNK3 (269 aa).

As to quaternary structure, interacts with REV8.

Its function is as follows. Probable transcriptional coactivator. The protein is Protein LNK3 of Arabidopsis thaliana (Mouse-ear cress).